Reading from the N-terminus, the 599-residue chain is Aspartate--tRNA(Asp/Asn) ligase (599 aa).

Residue Glu173 coordinates L-aspartate. An aspartate region spans residues 197–200 (QLFK). Arg219 lines the L-aspartate pocket. Residues 219 to 221 (RDE) and Gln228 contribute to the ATP site. Residue His449 coordinates L-aspartate. Residue Glu482 coordinates ATP. Arg489 serves as a coordination point for L-aspartate. An ATP-binding site is contributed by 534 to 537 (GLDR).

Belongs to the class-II aminoacyl-tRNA synthetase family. Type 1 subfamily. As to quaternary structure, homodimer.

It is found in the cytoplasm. The catalysed reaction is tRNA(Asx) + L-aspartate + ATP = L-aspartyl-tRNA(Asx) + AMP + diphosphate. Its function is as follows. Aspartyl-tRNA synthetase with relaxed tRNA specificity since it is able to aspartylate not only its cognate tRNA(Asp) but also tRNA(Asn). Reaction proceeds in two steps: L-aspartate is first activated by ATP to form Asp-AMP and then transferred to the acceptor end of tRNA(Asp/Asn). The sequence is that of Aspartate--tRNA(Asp/Asn) ligase from Marinobacter nauticus (strain ATCC 700491 / DSM 11845 / VT8) (Marinobacter aquaeolei).